We begin with the raw amino-acid sequence, 206 residues long: Recombination protein RecR (206 aa).

The C4-type zinc finger occupies 58–73; the sequence is CENCHNISDVAVCEIC. The 96-residue stretch at 81–176 folds into the Toprim domain; it reads QIVCVVEDVR…ITSSIARGIS (96 aa).

This sequence belongs to the RecR family.

May play a role in DNA repair. It seems to be involved in an RecBC-independent recombinational process of DNA repair. It may act with RecF and RecO. The protein is Recombination protein RecR of Flavobacterium psychrophilum (strain ATCC 49511 / DSM 21280 / CIP 103535 / JIP02/86).